A 249-amino-acid polypeptide reads, in one-letter code: 1-(5-phosphoribosyl)-5-[(5-phosphoribosylamino)methylideneamino] imidazole-4-carboxamide isomerase (249 aa).

D10 functions as the Proton acceptor in the catalytic mechanism. The active-site Proton donor is D131.

The protein belongs to the HisA/HisF family.

Its subcellular location is the cytoplasm. The enzyme catalyses 1-(5-phospho-beta-D-ribosyl)-5-[(5-phospho-beta-D-ribosylamino)methylideneamino]imidazole-4-carboxamide = 5-[(5-phospho-1-deoxy-D-ribulos-1-ylimino)methylamino]-1-(5-phospho-beta-D-ribosyl)imidazole-4-carboxamide. The protein operates within amino-acid biosynthesis; L-histidine biosynthesis; L-histidine from 5-phospho-alpha-D-ribose 1-diphosphate: step 4/9. In Brevibacillus brevis (strain 47 / JCM 6285 / NBRC 100599), this protein is 1-(5-phosphoribosyl)-5-[(5-phosphoribosylamino)methylideneamino] imidazole-4-carboxamide isomerase.